The sequence spans 160 residues: Cyanate hydratase (160 aa).

Active-site residues include Arg100, Glu103, and Ser126.

The protein belongs to the cyanase family.

It catalyses the reaction cyanate + hydrogencarbonate + 3 H(+) = NH4(+) + 2 CO2. In terms of biological role, catalyzes the reaction of cyanate with bicarbonate to produce ammonia and carbon dioxide. The protein is Cyanate hydratase of Arthroderma otae (strain ATCC MYA-4605 / CBS 113480) (Microsporum canis).